The chain runs to 193 residues: Non-specific lipid transfer protein GPI-anchored 1 (193 aa).

An N-terminal signal peptide occupies residues M1 to A22. 4 disulfide bridges follow: C35/C76, C45/C60, C61/C106, and C74/C116. N-linked (GlcNAc...) asparagine glycosylation is found at N110 and N135. Residues T138 to A161 form a disordered region. D165 carries GPI-anchor amidated aspartate lipidation. A propeptide spans G166–M193 (removed in mature form).

Belongs to the plant LTP family. Post-translationally, O-glycosylated on hydroxyprolines; noncontiguous hydroxylproline residues are glycosylated with arabinogalactan. Up-regulated in the epidermis of stems and leaves. Expressed in the epidermis, stem cortex, vascular bundles and mesophyll cells in root tips, cotyledons, seedlings, leaves, caulines, flowers, siliques, pollen, and early-developing seeds.

It localises to the cell membrane. It is found in the secreted. The protein localises to the cell wall. Its subcellular location is the endoplasmic reticulum. The protein resides in the golgi apparatus. Its function is as follows. Lipid transfer protein that, together with LTPG2, binds to lipids and functions as a component of the cuticular lipid export machinery that performs extensive export of intracellular lipids (e.g. C29 alkane) from epidermal cells to the surface to build the cuticular wax layer and silique walls. Involved in the establishment of resistance to the necrotrophic fungal pathogen Alternaria brassicicola. Contributes to pre-invasive defense against some non-host powdery mildew pathogens by preventing the penetration of the epidermal cell wall by the fungal agents (e.g. Blumeria graminis f. sp. hordei (Bgh)). Maybe involved in seed and ovule maturation and development, probably by regulating the fatty acids homeostasis during suberin and sporopollenin biosynthesis or deposition. In Arabidopsis thaliana (Mouse-ear cress), this protein is Non-specific lipid transfer protein GPI-anchored 1.